The sequence spans 895 residues: Cellulose 1,4-beta-cellobiosidase (895 aa).

An N-terminal signal peptide occupies residues 1 to 27; sequence MNFRRMLCAAIVLTIVLSIMLPSTVFA. Positions 40–199 constitute a CBM-cenC domain; that stretch reads NDLLYERTFD…YLDDVSLYDP (160 aa). A linker region spans residues 199-240; it reads PRFVKPVEYVLPQPDVRVNQVGYLPFAKKYATVVSSSTSPLK. The catalytic stretch occupies residues 241–815; that stretch reads WQLLNSANQV…WVTAYLDEID (575 aa). Asp-386 serves as the catalytic Nucleophile. Active-site residues include His-737, Asp-786, and Glu-795. Residues 828 to 894 form the Dockerin domain; it reads PEVIYGDCNG…ILKEIDVLPH (67 aa).

Belongs to the glycosyl hydrolase 9 (cellulase E) family.

It is found in the secreted. The catalysed reaction is Hydrolysis of (1-&gt;4)-beta-D-glucosidic linkages in cellulose and cellotetraose, releasing cellobiose from the non-reducing ends of the chains.. With respect to regulation, inhibited by cellobiose. This chain is Cellulose 1,4-beta-cellobiosidase (celK), found in Acetivibrio thermocellus (Hungateiclostridium thermocellum).